A 316-amino-acid chain; its full sequence is Aspartate carbamoyltransferase catalytic subunit (316 aa).

Arg58 and Thr59 together coordinate carbamoyl phosphate. Lys86 contributes to the L-aspartate binding site. Arg108, His136, and Gln139 together coordinate carbamoyl phosphate. The L-aspartate site is built by Arg169 and Arg223. Carbamoyl phosphate-binding residues include Gly265 and Pro266.

The protein belongs to the aspartate/ornithine carbamoyltransferase superfamily. ATCase family. As to quaternary structure, heterododecamer (2C3:3R2) of six catalytic PyrB chains organized as two trimers (C3), and six regulatory PyrI chains organized as three dimers (R2).

The enzyme catalyses carbamoyl phosphate + L-aspartate = N-carbamoyl-L-aspartate + phosphate + H(+). It functions in the pathway pyrimidine metabolism; UMP biosynthesis via de novo pathway; (S)-dihydroorotate from bicarbonate: step 2/3. In terms of biological role, catalyzes the condensation of carbamoyl phosphate and aspartate to form carbamoyl aspartate and inorganic phosphate, the committed step in the de novo pyrimidine nucleotide biosynthesis pathway. The chain is Aspartate carbamoyltransferase catalytic subunit from Anaeromyxobacter sp. (strain Fw109-5).